Reading from the N-terminus, the 308-residue chain is Ribosomal RNA large subunit methyltransferase F (308 aa).

Belongs to the methyltransferase superfamily. METTL16/RlmF family.

It localises to the cytoplasm. The enzyme catalyses adenosine(1618) in 23S rRNA + S-adenosyl-L-methionine = N(6)-methyladenosine(1618) in 23S rRNA + S-adenosyl-L-homocysteine + H(+). Specifically methylates the adenine in position 1618 of 23S rRNA. This Salmonella schwarzengrund (strain CVM19633) protein is Ribosomal RNA large subunit methyltransferase F.